A 1304-amino-acid polypeptide reads, in one-letter code: Neuronal cell adhesion molecule (1304 aa).

A signal peptide spans 1–24 (MQLKIMPKKKRLSAGRVPLILFLC). The Extracellular portion of the chain corresponds to 25 to 1167 (QMISALEVPL…ASRQVDIATQ (1143 aa)). Ig-like domains follow at residues 46-134 (PTIT…AAVS) and 141-235 (PSRS…QPIS). 2 disulfide bridges follow: cysteine 68–cysteine 123 and cysteine 167–cysteine 218. A glycan (N-linked (GlcNAc...) asparagine) is linked at asparagine 83. 5 N-linked (GlcNAc...) asparagine glycosylation sites follow: asparagine 223, asparagine 245, asparagine 251, asparagine 276, and asparagine 314. 4 Ig-like domains span residues 267-356 (PPTF…ISVR), 361-448 (PYWI…AFVN), 454-541 (PRIL…VHLE), and 545-632 (PTWI…AVLS). 2 disulfide bridges follow: cysteine 292-cysteine 340 and cysteine 382-cysteine 432. N-linked (GlcNAc...) asparagine glycosylation is found at asparagine 433 and asparagine 507. Disulfide bonds link cysteine 476–cysteine 525 and cysteine 567–cysteine 616. N-linked (GlcNAc...) asparagine glycans are attached at residues asparagine 619, asparagine 716, and asparagine 802. 5 consecutive Fibronectin type-III domains span residues 649 to 744 (PPFD…TKAS), 746 to 843 (PDKN…SGED), 848 to 950 (APGN…TPEG), 954 to 1051 (APSS…VDEA), and 1064 to 1156 (QAVN…TGPA). Residue asparagine 858 is glycosylated (N-linked (GlcNAc...) (complex) asparagine). N-linked (GlcNAc...) asparagine glycans are attached at residues asparagine 993, asparagine 1009, asparagine 1019, asparagine 1072, asparagine 1083, and asparagine 1115. A helical transmembrane segment spans residues 1168–1190 (GWFIGLMCAVALLILILLIVCFI). Residues 1191-1304 (RRNKGGKYPV…SPVNAMNSFV (114 aa)) lie on the Cytoplasmic side of the membrane. A compositionally biased stretch (basic and acidic residues) spans 1199–1219 (PVKEKEDAHADPEIQPMKEDD). Residues 1199–1304 (PVKEKEDAHA…SPVNAMNSFV (106 aa)) are disordered. The residue at position 1221 (threonine 1221) is a Phosphothreonine. Tyrosine 1225 carries the post-translational modification Phosphotyrosine. Serine 1226 bears the Phosphoserine mark. Basic and acidic residues predominate over residues 1241–1250 (PSDRTVKKED). Phosphoserine is present on residues serine 1251, serine 1254, serine 1271, serine 1290, serine 1291, and serine 1295. Positions 1288-1304 (NESSEAPSPVNAMNSFV) are enriched in polar residues.

Belongs to the immunoglobulin superfamily. L1/neurofascin/NgCAM family. As to quaternary structure, constituent of a NFASC/NRCAM/ankyrin-G complex. Detected in a complex with CNTN1 and PTPRB. Interacts with GLDN/gliomedin. Interacts with MYOC. As to expression, detected in all the examined tissues. In the brain it was detected in the amygdala, caudate nucleus, corpus callosum, hippocampus, hypothalamus, substantia nigra, subthalamic nucleus and thalamus.

The protein resides in the cell membrane. It is found in the cell projection. Its subcellular location is the axon. It localises to the secreted. Functionally, cell adhesion protein that is required for normal responses to cell-cell contacts in brain and in the peripheral nervous system. Plays a role in neurite outgrowth in response to contactin binding. Plays a role in mediating cell-cell contacts between Schwann cells and axons. Plays a role in the formation and maintenance of the nodes of Ranvier on myelinated axons. Nodes of Ranvier contain clustered sodium channels that are crucial for the saltatory propagation of action potentials along myelinated axons. During development, nodes of Ranvier are formed by the fusion of two heminodes. Required for normal clustering of sodium channels at heminodes; not required for the formation of mature nodes with normal sodium channel clusters. Required, together with GLDN, for maintaining NFASC and sodium channel clusters at mature nodes of Ranvier. This is Neuronal cell adhesion molecule (NRCAM) from Homo sapiens (Human).